Consider the following 60-residue polypeptide: Large ribosomal subunit protein bL32 (60 aa).

It belongs to the bacterial ribosomal protein bL32 family.

The polypeptide is Large ribosomal subunit protein bL32 (Persephonella marina (strain DSM 14350 / EX-H1)).